Reading from the N-terminus, the 211-residue chain is Thiamine-phosphate synthase (211 aa).

4-amino-2-methyl-5-(diphosphooxymethyl)pyrimidine is bound by residues 36 to 40 (QLRDK) and N68. 2 residues coordinate Mg(2+): D69 and D88. S107 provides a ligand contact to 4-amino-2-methyl-5-(diphosphooxymethyl)pyrimidine. 133–135 (TKS) provides a ligand contact to 2-[(2R,5Z)-2-carboxy-4-methylthiazol-5(2H)-ylidene]ethyl phosphate. K136 provides a ligand contact to 4-amino-2-methyl-5-(diphosphooxymethyl)pyrimidine. Residues G164 and 184-185 (IS) each bind 2-[(2R,5Z)-2-carboxy-4-methylthiazol-5(2H)-ylidene]ethyl phosphate.

The protein belongs to the thiamine-phosphate synthase family. Requires Mg(2+) as cofactor.

The enzyme catalyses 2-[(2R,5Z)-2-carboxy-4-methylthiazol-5(2H)-ylidene]ethyl phosphate + 4-amino-2-methyl-5-(diphosphooxymethyl)pyrimidine + 2 H(+) = thiamine phosphate + CO2 + diphosphate. It catalyses the reaction 2-(2-carboxy-4-methylthiazol-5-yl)ethyl phosphate + 4-amino-2-methyl-5-(diphosphooxymethyl)pyrimidine + 2 H(+) = thiamine phosphate + CO2 + diphosphate. It carries out the reaction 4-methyl-5-(2-phosphooxyethyl)-thiazole + 4-amino-2-methyl-5-(diphosphooxymethyl)pyrimidine + H(+) = thiamine phosphate + diphosphate. Its pathway is cofactor biosynthesis; thiamine diphosphate biosynthesis; thiamine phosphate from 4-amino-2-methyl-5-diphosphomethylpyrimidine and 4-methyl-5-(2-phosphoethyl)-thiazole: step 1/1. Its function is as follows. Condenses 4-methyl-5-(beta-hydroxyethyl)thiazole monophosphate (THZ-P) and 2-methyl-4-amino-5-hydroxymethyl pyrimidine pyrophosphate (HMP-PP) to form thiamine monophosphate (TMP). This Halalkalibacterium halodurans (strain ATCC BAA-125 / DSM 18197 / FERM 7344 / JCM 9153 / C-125) (Bacillus halodurans) protein is Thiamine-phosphate synthase.